The primary structure comprises 348 residues: Phosphate acyltransferase (348 aa).

Belongs to the PlsX family. As to quaternary structure, homodimer. Probably interacts with PlsY.

It is found in the cytoplasm. The enzyme catalyses a fatty acyl-[ACP] + phosphate = an acyl phosphate + holo-[ACP]. The protein operates within lipid metabolism; phospholipid metabolism. Functionally, catalyzes the reversible formation of acyl-phosphate (acyl-PO(4)) from acyl-[acyl-carrier-protein] (acyl-ACP). This enzyme utilizes acyl-ACP as fatty acyl donor, but not acyl-CoA. This chain is Phosphate acyltransferase, found in Leuconostoc citreum (strain KM20).